The chain runs to 228 residues: Phosphoribosylformylglycinamidine synthase subunit PurQ (228 aa).

In terms of domain architecture, Glutamine amidotransferase type-1 spans 3–225; that stretch reads FAVLVFPGSN…LTTLKSGVVT (223 aa). C86 serves as the catalytic Nucleophile. Catalysis depends on residues H194 and E196.

In terms of assembly, part of the FGAM synthase complex composed of 1 PurL, 1 PurQ and 2 PurS subunits.

The protein resides in the cytoplasm. The catalysed reaction is N(2)-formyl-N(1)-(5-phospho-beta-D-ribosyl)glycinamide + L-glutamine + ATP + H2O = 2-formamido-N(1)-(5-O-phospho-beta-D-ribosyl)acetamidine + L-glutamate + ADP + phosphate + H(+). It catalyses the reaction L-glutamine + H2O = L-glutamate + NH4(+). The protein operates within purine metabolism; IMP biosynthesis via de novo pathway; 5-amino-1-(5-phospho-D-ribosyl)imidazole from N(2)-formyl-N(1)-(5-phospho-D-ribosyl)glycinamide: step 1/2. Its function is as follows. Part of the phosphoribosylformylglycinamidine synthase complex involved in the purines biosynthetic pathway. Catalyzes the ATP-dependent conversion of formylglycinamide ribonucleotide (FGAR) and glutamine to yield formylglycinamidine ribonucleotide (FGAM) and glutamate. The FGAM synthase complex is composed of three subunits. PurQ produces an ammonia molecule by converting glutamine to glutamate. PurL transfers the ammonia molecule to FGAR to form FGAM in an ATP-dependent manner. PurS interacts with PurQ and PurL and is thought to assist in the transfer of the ammonia molecule from PurQ to PurL. The protein is Phosphoribosylformylglycinamidine synthase subunit PurQ of Latilactobacillus sakei subsp. sakei (strain 23K) (Lactobacillus sakei subsp. sakei).